The following is a 142-amino-acid chain: FAD synthase (142 aa).

ATP is bound by residues T9–F10, H14–H17, D92, and Y119.

Belongs to the archaeal FAD synthase family. In terms of assembly, homodimer. The cofactor is a divalent metal cation.

The catalysed reaction is FMN + ATP + H(+) = FAD + diphosphate. Its pathway is cofactor biosynthesis; FAD biosynthesis; FAD from FMN: step 1/1. In terms of biological role, catalyzes the transfer of the AMP portion of ATP to flavin mononucleotide (FMN) to produce flavin adenine dinucleotide (FAD) coenzyme. This chain is FAD synthase, found in Halorhabdus utahensis (strain DSM 12940 / JCM 11049 / AX-2).